Consider the following 450-residue polypeptide: MTENEQIFWNRVLELAQSQLKQATYEFFVHDARLIKVDNHVATIFLDQMKELFWEKNLKDVILTAGFEVYNAQIAVDYVYEDNLMIEQQHQGQQGYTEQAFQQLPAVQSDLNPKYSFDNFIQGDENRWAVAASIAVANTPGTTYNPLFIWGGPGLGKTHLLNAIGNSVLLENPNARIKYITAENFINEFVVHIRLDTMDELKEKFRNLDLLLIDDIQSLAKKTLSGTQEEFFNTFNALHNNNKQIVLTSDRTPDHLNDLEDRLVTRFKWGLTVNITPPDFETRVAILTNKIQEYNFVFPQDTIEYLAGQFDSNVRDLEGALKDISLVANFKQIDTITVDIAAEAIRARKQDGPKMTVIPIEEIQAQVGKFYGVTVKEIKATKRTQDIVLARQVAMFLAREMTDNSLPKIGKEFGGRDHSTVLHAYNKIKNMIGQDESLRIEIETIKNKIK.

The segment at 1 to 84 (MTENEQIFWN…AVDYVYEDNL (84 aa)) is domain I, interacts with DnaA modulators. Positions 84-109 (LMIEQQHQGQQGYTEQAFQQLPAVQS) are domain II. Residues 110 to 328 (DLNPKYSFDN…GALKDISLVA (219 aa)) are domain III, AAA+ region. ATP is bound by residues G154, G156, K157, and T158. The domain IV, binds dsDNA stretch occupies residues 329–450 (NFKQIDTITV…EIETIKNKIK (122 aa)).

This sequence belongs to the DnaA family. Oligomerizes as a right-handed, spiral filament on DNA at oriC.

The protein resides in the cytoplasm. Its function is as follows. Plays an essential role in the initiation and regulation of chromosomal replication. ATP-DnaA binds to the origin of replication (oriC) to initiate formation of the DNA replication initiation complex once per cell cycle. Binds the DnaA box (a 9 base pair repeat at the origin) and separates the double-stranded (ds)DNA. Forms a right-handed helical filament on oriC DNA; dsDNA binds to the exterior of the filament while single-stranded (ss)DNA is stabiized in the filament's interior. The ATP-DnaA-oriC complex binds and stabilizes one strand of the AT-rich DNA unwinding element (DUE), permitting loading of DNA polymerase. After initiation quickly degrades to an ADP-DnaA complex that is not apt for DNA replication. Binds acidic phospholipids. The chain is Chromosomal replication initiator protein DnaA from Streptococcus equi subsp. zooepidemicus (strain H70).